The primary structure comprises 215 residues: Leucyl/phenylalanyl-tRNA--protein transferase (215 aa).

It belongs to the L/F-transferase family.

The protein localises to the cytoplasm. It catalyses the reaction N-terminal L-lysyl-[protein] + L-leucyl-tRNA(Leu) = N-terminal L-leucyl-L-lysyl-[protein] + tRNA(Leu) + H(+). It carries out the reaction N-terminal L-arginyl-[protein] + L-leucyl-tRNA(Leu) = N-terminal L-leucyl-L-arginyl-[protein] + tRNA(Leu) + H(+). The enzyme catalyses L-phenylalanyl-tRNA(Phe) + an N-terminal L-alpha-aminoacyl-[protein] = an N-terminal L-phenylalanyl-L-alpha-aminoacyl-[protein] + tRNA(Phe). Functionally, functions in the N-end rule pathway of protein degradation where it conjugates Leu, Phe and, less efficiently, Met from aminoacyl-tRNAs to the N-termini of proteins containing an N-terminal arginine or lysine. This Campylobacter jejuni subsp. doylei (strain ATCC BAA-1458 / RM4099 / 269.97) protein is Leucyl/phenylalanyl-tRNA--protein transferase.